We begin with the raw amino-acid sequence, 314 residues long: ATP synthase gamma chain (314 aa).

It belongs to the ATPase gamma chain family. As to quaternary structure, F-type ATPases have 2 components, CF(1) - the catalytic core - and CF(0) - the membrane proton channel. CF(1) has five subunits: alpha(3), beta(3), gamma(1), delta(1), epsilon(1). CF(0) has three main subunits: a, b and c.

It is found in the cell membrane. Functionally, produces ATP from ADP in the presence of a proton gradient across the membrane. The gamma chain is believed to be important in regulating ATPase activity and the flow of protons through the CF(0) complex. The chain is ATP synthase gamma chain from Cutibacterium acnes (strain DSM 16379 / KPA171202) (Propionibacterium acnes).